A 251-amino-acid polypeptide reads, in one-letter code: Copper transport protein CTR1 (251 aa).

The chain crosses the membrane as a helical span at residues 90–110 (AFGIFVLLFFVAFLARMLEFV). A compositionally biased stretch (basic and acidic residues) spans 157 to 173 (DESIDKQNSPQHEETTK). A disordered region spans residues 157–176 (DESIDKQNSPQHEETTKARG). Residues 208–228 (MLAAMTYTLTYFFAVVIGSGV) traverse the membrane as a helical segment.

In terms of assembly, oligomer.

It localises to the cell membrane. Required for high affinity copper (probably reduced Cu I) transport into the cell. This chain is Copper transport protein CTR1 (CTR1), found in Candida albicans (strain SC5314 / ATCC MYA-2876) (Yeast).